Consider the following 228-residue polypeptide: Cytidylate kinase (228 aa).

12 to 20 (GPSGAGKGT) contacts ATP.

This sequence belongs to the cytidylate kinase family. Type 1 subfamily.

It localises to the cytoplasm. It carries out the reaction CMP + ATP = CDP + ADP. The enzyme catalyses dCMP + ATP = dCDP + ADP. This is Cytidylate kinase from Photobacterium profundum (strain SS9).